We begin with the raw amino-acid sequence, 255 residues long: 28.1 kDa virulence protein (255 aa).

This sequence belongs to the SpvA family.

In terms of biological role, not known. This protein is involved in the virulence of salmonellas. This is 28.1 kDa virulence protein (mkaB) from Salmonella typhimurium.